Consider the following 271-residue polypeptide: Formamidopyrimidine-DNA glycosylase (271 aa).

Catalysis depends on P2, which acts as the Schiff-base intermediate with DNA. E3 serves as the catalytic Proton donor. K58 functions as the Proton donor; for beta-elimination activity in the catalytic mechanism. DNA contacts are provided by H91, R110, and R152. An FPG-type zinc finger spans residues 237–271; it reads RAYGRGGQPCTVCQTELKEIKLGQRTSVFCPSCQR. The active-site Proton donor; for delta-elimination activity is the R261.

Belongs to the FPG family. In terms of assembly, monomer. Zn(2+) serves as cofactor.

The catalysed reaction is Hydrolysis of DNA containing ring-opened 7-methylguanine residues, releasing 2,6-diamino-4-hydroxy-5-(N-methyl)formamidopyrimidine.. It catalyses the reaction 2'-deoxyribonucleotide-(2'-deoxyribose 5'-phosphate)-2'-deoxyribonucleotide-DNA = a 3'-end 2'-deoxyribonucleotide-(2,3-dehydro-2,3-deoxyribose 5'-phosphate)-DNA + a 5'-end 5'-phospho-2'-deoxyribonucleoside-DNA + H(+). In terms of biological role, involved in base excision repair of DNA damaged by oxidation or by mutagenic agents. Acts as a DNA glycosylase that recognizes and removes damaged bases. Has a preference for oxidized purines, such as 7,8-dihydro-8-oxoguanine (8-oxoG). Has AP (apurinic/apyrimidinic) lyase activity and introduces nicks in the DNA strand. Cleaves the DNA backbone by beta-delta elimination to generate a single-strand break at the site of the removed base with both 3'- and 5'-phosphates. The protein is Formamidopyrimidine-DNA glycosylase of Hahella chejuensis (strain KCTC 2396).